Reading from the N-terminus, the 287-residue chain is Myoblast determination protein 1 homolog B (287 aa).

Residues 96–147 (DRRRAATMRERRRLSKVNDAFETLKRCTSTNPNQRLPKVDILRNAISYIDSL) enclose the bHLH domain. Disordered stretches follow at residues 161–202 (NMEH…FYTD) and 231–277 (QSPS…QLSH). Over residues 168–188 (DSDASSPSSNCSDGMNSPPCS) the composition is skewed to low complexity. Polar residues predominate over residues 267 to 277 (SPGNSCTQLSH).

Efficient DNA binding requires dimerization with another bHLH protein.

The protein resides in the nucleus. Its function is as follows. May act as a transcriptional activator that promotes transcription of muscle-specific target genes and plays a role in muscle differentiation. This chain is Myoblast determination protein 1 homolog B (myod1-b), found in Xenopus laevis (African clawed frog).